A 295-amino-acid chain; its full sequence is Ornithine carbamoyltransferase, catabolic (295 aa).

Residues 49 to 52, Q76, R100, and 127 to 130 each bind carbamoyl phosphate; these read STRT and HPCQ. L-ornithine-binding positions include N155, D213, and 217–218; that span reads SM. Carbamoyl phosphate is bound by residues 253 to 254 and R281; that span reads CL.

The protein belongs to the aspartate/ornithine carbamoyltransferase superfamily. OTCase family. In terms of assembly, homohexamer.

Its subcellular location is the cytoplasm. It catalyses the reaction carbamoyl phosphate + L-ornithine = L-citrulline + phosphate + H(+). Its pathway is amino-acid degradation; L-arginine degradation via ADI pathway; carbamoyl phosphate from L-arginine: step 2/2. Its activity is regulated as follows. Arginine lead to a slight activation. Inhibited by all nucleotide phosphates. Its function is as follows. Reversibly catalyzes the transfer of the carbamoyl group from carbamoyl phosphate (CP) to the N(epsilon) atom of ornithine (ORN) to produce L-citrulline. This is Ornithine carbamoyltransferase, catabolic (arcB) from Halobacterium salinarum (strain ATCC 700922 / JCM 11081 / NRC-1) (Halobacterium halobium).